Here is a 131-residue protein sequence, read N- to C-terminus: Large ribosomal subunit protein eL32 (131 aa).

Belongs to the eukaryotic ribosomal protein eL32 family.

The polypeptide is Large ribosomal subunit protein eL32 (RPL32) (Candida glabrata (strain ATCC 2001 / BCRC 20586 / JCM 3761 / NBRC 0622 / NRRL Y-65 / CBS 138) (Yeast)).